A 588-amino-acid chain; its full sequence is Aspartate--tRNA ligase (588 aa).

An L-aspartate-binding site is contributed by glutamate 172. An aspartate region spans residues 196–199 (QLFK). Arginine 218 provides a ligand contact to L-aspartate. ATP contacts are provided by residues 218–220 (RDE) and glutamine 227. An L-aspartate-binding site is contributed by histidine 449. Glutamate 483 serves as a coordination point for ATP. Residue arginine 490 participates in L-aspartate binding. 535–538 (GLDR) contributes to the ATP binding site.

It belongs to the class-II aminoacyl-tRNA synthetase family. Type 1 subfamily. In terms of assembly, homodimer.

Its subcellular location is the cytoplasm. The enzyme catalyses tRNA(Asp) + L-aspartate + ATP = L-aspartyl-tRNA(Asp) + AMP + diphosphate. Catalyzes the attachment of L-aspartate to tRNA(Asp) in a two-step reaction: L-aspartate is first activated by ATP to form Asp-AMP and then transferred to the acceptor end of tRNA(Asp). The polypeptide is Aspartate--tRNA ligase (Haemophilus influenzae (strain 86-028NP)).